The sequence spans 776 residues: Protein SEY1 (776 aa).

The Cytoplasmic portion of the chain corresponds to 1–681 (MADRSAIQLI…KRSIITTRTH (681 aa)). In terms of domain architecture, GB1/RHD3-type G spans 34–263 (GLDYHVISVF…TENYYFKPQY (230 aa)). 44 to 51 (GSQSSGKS) contacts GTP. Residues 682–702 (IPPWIYVLLAVLGWNEFVAVI) traverse the membrane as a helical segment. Residues 703–705 (RNP) are Lumenal-facing. A helical membrane pass occupies residues 706–726 (LFVTLTLILGATFFVIHKFGL). Topologically, residues 727–776 (WGPVVNVVQSAVGETRTAIKDKLRQFVVEDHEVKESFEMKDFSKNEQKEK) are cytoplasmic.

It belongs to the TRAFAC class dynamin-like GTPase superfamily. GB1/RHD3 GTPase family. RHD3 subfamily. Interacts with RTN1 and YOP1; GTP binding is not required for these interactions.

It localises to the endoplasmic reticulum membrane. In terms of biological role, cooperates with the reticulon proteins RTN1 and RTN2 and the tubule-shaping DP1 family protein YOP1 to generate and maintain the structure of the tubular endoplasmic reticulum network. Has GTPase activity, which is required for its function in ER organization. The chain is Protein SEY1 from Saccharomyces cerevisiae (strain RM11-1a) (Baker's yeast).